The sequence spans 564 residues: Hexose transporter HXT13 (564 aa).

Residues 1–52 (MSSAQSSIDSDGDVRDADIHVAPPVEKEWSDGFDDNEVINGDNVEPPKRGLI) lie on the Cytoplasmic side of the membrane. The helical transmembrane segment at 53-73 (GYLVIYLLCYPISFGGFLPGW) threads the bilayer. Over 74-109 (DSGITAGFINMDNFKMNFGSYKHSTGEYYLSNVRMG) the chain is Extracellular. Residues 110 to 130 (LLVAMFSIGCAIGGLIFARLA) form a helical membrane-spanning segment. Residues 131–136 (DTLGRR) lie on the Cytoplasmic side of the membrane. Residues 137 to 157 (LAIVIVVLVYMVGAIIQISSN) traverse the membrane as a helical segment. Residues 158–167 (HKWYQYFVGK) are Extracellular-facing. A helical transmembrane segment spans residues 168 to 188 (IIYGLGAGGCSVLCPMLLSEI). At 189–194 (APTDLR) the chain is on the cytoplasmic side. A helical membrane pass occupies residues 195-215 (GGLVSLYQLNMTFGIFLGYCS). Over 216–229 (VYGTRKYDNTAQWR) the chain is Extracellular. Residues 230–250 (VPLGLCFLWALIIIIGMLLVP) traverse the membrane as a helical segment. Residues 251–333 (ESPRYLIECE…VQTFLQLTGE (83 aa)) are Cytoplasmic-facing. A helical membrane pass occupies residues 334-350 (NYFFFYGTTIFKSVGLT). The Extracellular segment spans residues 351–356 (DGFETS). A helical membrane pass occupies residues 357 to 374 (IVLGTVNFFSTIIAVMVV). The Cytoplasmic segment spans residues 375–381 (DKIGRRK). A helical membrane pass occupies residues 382–402 (CLLFGAAGMMACMVIFASIGV). At 403 to 424 (KCLYPHGQDGPSSKGAGNAMIV) the chain is on the extracellular side. The chain crosses the membrane as a helical span at residues 425–445 (FTCFYIFCFATTWAPVAYIVV). The Cytoplasmic portion of the chain corresponds to 446–462 (AESFPSKVKSRAMSIST). Residues 463–483 (ACNWLWQFLIGFFTPFITGSI) traverse the membrane as a helical segment. A topological domain (extracellular) is located at residue His-484. The helical transmembrane segment at 485–505 (FYYGYVFVGCLVAMFLYVFFF) threads the bilayer. The Cytoplasmic segment spans residues 506–564 (LPETIGLSLEEIQLLYEEGIKPWKSASWVPPSRRGISSEESKTEKKDWKKFLKFSKNSD). The tract at residues 530–551 (SASWVPPSRRGISSEESKTEKK) is disordered. Residues 541–551 (ISSEESKTEKK) show a composition bias toward basic and acidic residues.

It belongs to the major facilitator superfamily. Sugar transporter (TC 2.A.1.1) family.

The protein resides in the membrane. In terms of biological role, probable glucose transporter. The protein is Hexose transporter HXT13 (HXT13) of Saccharomyces cerevisiae (strain ATCC 204508 / S288c) (Baker's yeast).